A 307-amino-acid chain; its full sequence is UDP-3-O-acyl-N-acetylglucosamine deacetylase (307 aa).

His78, His241, and Asp245 together coordinate Zn(2+). His268 serves as the catalytic Proton donor.

It belongs to the LpxC family. Zn(2+) is required as a cofactor.

It carries out the reaction a UDP-3-O-[(3R)-3-hydroxyacyl]-N-acetyl-alpha-D-glucosamine + H2O = a UDP-3-O-[(3R)-3-hydroxyacyl]-alpha-D-glucosamine + acetate. It participates in glycolipid biosynthesis; lipid IV(A) biosynthesis; lipid IV(A) from (3R)-3-hydroxytetradecanoyl-[acyl-carrier-protein] and UDP-N-acetyl-alpha-D-glucosamine: step 2/6. In terms of biological role, catalyzes the hydrolysis of UDP-3-O-myristoyl-N-acetylglucosamine to form UDP-3-O-myristoylglucosamine and acetate, the committed step in lipid A biosynthesis. This Verminephrobacter eiseniae (strain EF01-2) protein is UDP-3-O-acyl-N-acetylglucosamine deacetylase.